Here is a 408-residue protein sequence, read N- to C-terminus: D-inositol 3-phosphate glycosyltransferase (408 aa).

His7 contributes to the 1D-myo-inositol 3-phosphate binding site. UDP-N-acetyl-alpha-D-glucosamine contacts are provided by residues 13-14 and Gly21; that span reads QP. 1D-myo-inositol 3-phosphate-binding positions include 18-23, Lys76, Tyr109, Thr133, and Arg153; that span reads DAGGMN. Residues Arg227, Lys232, and Val288 each contribute to the UDP-N-acetyl-alpha-D-glucosamine site. 3 residues coordinate Mg(2+): Phe297, Arg298, and Ala300. The UDP-N-acetyl-alpha-D-glucosamine site is built by Glu310 and Glu318. Thr324 lines the Mg(2+) pocket.

The protein belongs to the glycosyltransferase group 1 family. MshA subfamily. As to quaternary structure, homodimer.

The enzyme catalyses 1D-myo-inositol 3-phosphate + UDP-N-acetyl-alpha-D-glucosamine = 1D-myo-inositol 2-acetamido-2-deoxy-alpha-D-glucopyranoside 3-phosphate + UDP + H(+). Its function is as follows. Catalyzes the transfer of a N-acetyl-glucosamine moiety to 1D-myo-inositol 3-phosphate to produce 1D-myo-inositol 2-acetamido-2-deoxy-glucopyranoside 3-phosphate in the mycothiol biosynthesis pathway. The polypeptide is D-inositol 3-phosphate glycosyltransferase (Paenarthrobacter aurescens (strain TC1)).